Reading from the N-terminus, the 135-residue chain is Interleukin-5 (135 aa).

Positions Met1–Ala19 are cleaved as a signal peptide. N-linked (GlcNAc...) asparagine glycosylation is found at Asn48, Asn77, and Asn91.

This sequence belongs to the IL-5 family. In terms of assembly, homodimer; disulfide-linked. Interacts with IL5RA. Interacts with CSF2RB.

It localises to the secreted. Homodimeric cytokine expressed predominantly by T-lymphocytes and NK cells that plays an important role in the survival, differentiation, and chemotaxis of eosinophils. Also acts on activated and resting B-cells to induce immunoglobulin production, growth, and differentiation. Mechanistically, exerts its biological effects through a receptor composed of IL5RA subunit and the cytokine receptor common subunit beta/CSF2RB. Binding to the receptor leads to activation of various kinases including LYN, SYK and JAK2 and thereby propagates signals through the RAS-MAPK and JAK-STAT5 pathways respectively. The protein is Interleukin-5 (IL5) of Cavia porcellus (Guinea pig).